The sequence spans 444 residues: EMI domain-containing protein 1 (444 aa).

The signal sequence occupies residues 1–22 (MGGPRAWTLLCLGLLLPGGGAA). In terms of domain architecture, EMI spans 33–106 (RRNWCSYVVT…PGHSGVTCEE (74 aa)). 3 disulfides stabilise this stretch: Cys-37/Cys-96, Cys-62/Cys-68, and Cys-95/Cys-104. Residue Thr-42 is glycosylated (O-linked (Fuc) threonine). An N-linked (GlcNAc...) asparagine glycan is attached at Asn-51. An N-linked (GlcNAc...) asparagine glycan is attached at Asn-136. 2 disordered regions span residues 161–374 (EQTV…KSHW) and 404–444 (PDLG…SERS). Residues 221-371 (GPPGPQGPPG…PGPKGDPGEK (151 aa)) form the Collagen-like domain. The segment covering 222-231 (PPGPQGPPGR) has biased composition (pro residues). A compositionally biased stretch (low complexity) spans 232 to 243 (PGQTGAAGTPGK). Composition is skewed to pro residues over residues 244 to 264 (MGPPGPPGPPGPPGPPAPVGP) and 292 to 311 (PTGPPGPPGPPGPMGPPGLP).

In terms of assembly, homo- or heteromers. O-fucosylated at Thr-42 within the EMI domain by FUT10/POFUT3 and FUT11/POFUT4.

It is found in the secreted. The protein localises to the extracellular space. The protein resides in the extracellular matrix. The chain is EMI domain-containing protein 1 (Emid1) from Mus musculus (Mouse).